The sequence spans 385 residues: 1-deoxy-D-xylulose 5-phosphate reductoisomerase (385 aa).

The NADPH site is built by Thr10, Gly11, Ser12, Ile13, Lys37, and Asn124. Lys125 provides a ligand contact to 1-deoxy-D-xylulose 5-phosphate. Position 126 (Glu126) interacts with NADPH. Residue Asp150 participates in Mn(2+) binding. Positions 151, 152, 176, and 199 each coordinate 1-deoxy-D-xylulose 5-phosphate. Glu152 is a binding site for Mn(2+). Gly205 provides a ligand contact to NADPH. 1-deoxy-D-xylulose 5-phosphate is bound by residues Ser212, Asn217, Lys218, and Glu221. Glu221 contributes to the Mn(2+) binding site.

It belongs to the DXR family. The cofactor is Mg(2+). Mn(2+) is required as a cofactor.

It catalyses the reaction 2-C-methyl-D-erythritol 4-phosphate + NADP(+) = 1-deoxy-D-xylulose 5-phosphate + NADPH + H(+). It participates in isoprenoid biosynthesis; isopentenyl diphosphate biosynthesis via DXP pathway; isopentenyl diphosphate from 1-deoxy-D-xylulose 5-phosphate: step 1/6. In terms of biological role, catalyzes the NADPH-dependent rearrangement and reduction of 1-deoxy-D-xylulose-5-phosphate (DXP) to 2-C-methyl-D-erythritol 4-phosphate (MEP). The polypeptide is 1-deoxy-D-xylulose 5-phosphate reductoisomerase (Clostridium botulinum (strain 657 / Type Ba4)).